The following is a 260-amino-acid chain: Adenosylcobinamide-GDP ribazoletransferase (260 aa).

7 consecutive transmembrane segments (helical) span residues 31–51, 57–77, 108–128, 131–151, 173–193, 206–226, and 240–260; these read FYFLPLIGGLIAGLVLIPIYF, IEISGFISLLLYLFLTGSIHL, YGTIGLNVFLLLRYINYSTII, AGLLILAGIISRLSGLAVVVF, FFFWLVLVCFLSLFTPEIAAF, LKYLLLPLTAFILTFIIIRIS, and LIVELTELAVLSTSFFINVHL.

The protein belongs to the CobS family. Requires Mg(2+) as cofactor.

The protein localises to the cell inner membrane. It catalyses the reaction alpha-ribazole + adenosylcob(III)inamide-GDP = adenosylcob(III)alamin + GMP + H(+). The catalysed reaction is alpha-ribazole 5'-phosphate + adenosylcob(III)inamide-GDP = adenosylcob(III)alamin 5'-phosphate + GMP + H(+). Its pathway is cofactor biosynthesis; adenosylcobalamin biosynthesis; adenosylcobalamin from cob(II)yrinate a,c-diamide: step 7/7. In terms of biological role, joins adenosylcobinamide-GDP and alpha-ribazole to generate adenosylcobalamin (Ado-cobalamin). Also synthesizes adenosylcobalamin 5'-phosphate from adenosylcobinamide-GDP and alpha-ribazole 5'-phosphate. The sequence is that of Adenosylcobinamide-GDP ribazoletransferase from Treponema denticola (strain ATCC 35405 / DSM 14222 / CIP 103919 / JCM 8153 / KCTC 15104).